A 338-amino-acid chain; its full sequence is MTKQKVAILGPGSWGTALSQVLNDNGHDVRLWGNISDQIEEINTKHTNRHYFKDIVLDKNITATLDLGQALSDVDAVLFVVPTKVTRLVARQVAAILDHKVVVMHASKGLEPETHERLSTILEEEIPAHFRSEVVVVSGPSHAEETIVRDITLITAASKDIEAAKYVQSLFSNHYFRLYTNTDVIGVETAGALKNIIAVGAGALHGLGYGDNAKAAVITRGLAEITRLGVKLGADPLTYSGLSGVGDLIVTGTSVHSRNWRAGAALGRGEKLEDIERNMGMVIEGIATTKVAYEIAQDLGVYMPITTAIYKSIYEGADIKESILGMMSNEFRSENEWH.

Positions 13, 14, and 108 each coordinate NADPH. Lys-108, Gly-139, and Ser-141 together coordinate sn-glycerol 3-phosphate. Residue Ala-143 coordinates NADPH. Sn-glycerol 3-phosphate is bound by residues Lys-194, Asp-247, Ser-257, Arg-258, and Asn-259. The active-site Proton acceptor is Lys-194. Residue Arg-258 coordinates NADPH. NADPH-binding residues include Val-282 and Glu-284.

It belongs to the NAD-dependent glycerol-3-phosphate dehydrogenase family.

It localises to the cytoplasm. It catalyses the reaction sn-glycerol 3-phosphate + NAD(+) = dihydroxyacetone phosphate + NADH + H(+). It carries out the reaction sn-glycerol 3-phosphate + NADP(+) = dihydroxyacetone phosphate + NADPH + H(+). Its pathway is membrane lipid metabolism; glycerophospholipid metabolism. In terms of biological role, catalyzes the reduction of the glycolytic intermediate dihydroxyacetone phosphate (DHAP) to sn-glycerol 3-phosphate (G3P), the key precursor for phospholipid synthesis. This chain is Glycerol-3-phosphate dehydrogenase [NAD(P)+], found in Streptococcus pyogenes serotype M2 (strain MGAS10270).